We begin with the raw amino-acid sequence, 310 residues long: tRNA dimethylallyltransferase (310 aa).

19-26 (GPTGTGKS) lines the ATP pocket. 21–26 (TGTGKS) is a binding site for substrate.

Belongs to the IPP transferase family. Monomer. The cofactor is Mg(2+).

The enzyme catalyses adenosine(37) in tRNA + dimethylallyl diphosphate = N(6)-dimethylallyladenosine(37) in tRNA + diphosphate. Functionally, catalyzes the transfer of a dimethylallyl group onto the adenine at position 37 in tRNAs that read codons beginning with uridine, leading to the formation of N6-(dimethylallyl)adenosine (i(6)A). The sequence is that of tRNA dimethylallyltransferase from Saccharopolyspora erythraea (strain ATCC 11635 / DSM 40517 / JCM 4748 / NBRC 13426 / NCIMB 8594 / NRRL 2338).